The chain runs to 147 residues: Hemoglobin subunit beta (147 aa).

N-acetylvaline is present on V2. The Globin domain maps to 3-147; sequence HLADDEKAAV…VSTALAHKYH (145 aa). S45 is subject to Phosphoserine. At K60 the chain carries N6-acetyllysine. H64 lines the heme b pocket. The residue at position 83 (K83) is an N6-acetyllysine. H93 contributes to the heme b binding site. Residue C94 is modified to S-nitrosocysteine. K145 is subject to N6-acetyllysine.

Belongs to the globin family. In terms of assembly, heterotetramer of two alpha chains and two beta chains. Red blood cells.

Functionally, involved in oxygen transport from the lung to the various peripheral tissues. The chain is Hemoglobin subunit beta (HBB) from Bradypus tridactylus (Pale-throated three-toed sloth).